We begin with the raw amino-acid sequence, 377 residues long: Succinyl-diaminopimelate desuccinylase (377 aa).

His-68 contributes to the Zn(2+) binding site. Asp-70 is an active-site residue. Asp-101 is a Zn(2+) binding site. Catalysis depends on Glu-135, which acts as the Proton acceptor. Zn(2+) contacts are provided by Glu-136, Glu-164, and His-350.

This sequence belongs to the peptidase M20A family. DapE subfamily. Homodimer. Zn(2+) is required as a cofactor. It depends on Co(2+) as a cofactor.

The enzyme catalyses N-succinyl-(2S,6S)-2,6-diaminopimelate + H2O = (2S,6S)-2,6-diaminopimelate + succinate. Its pathway is amino-acid biosynthesis; L-lysine biosynthesis via DAP pathway; LL-2,6-diaminopimelate from (S)-tetrahydrodipicolinate (succinylase route): step 3/3. Functionally, catalyzes the hydrolysis of N-succinyl-L,L-diaminopimelic acid (SDAP), forming succinate and LL-2,6-diaminopimelate (DAP), an intermediate involved in the bacterial biosynthesis of lysine and meso-diaminopimelic acid, an essential component of bacterial cell walls. This is Succinyl-diaminopimelate desuccinylase from Aliivibrio fischeri (strain ATCC 700601 / ES114) (Vibrio fischeri).